Here is a 45-residue protein sequence, read N- to C-terminus: Unknown protein from spots 23/28/205 of 2D-PAGE of thylakoid (45 aa).

It is found in the plastid. It localises to the chloroplast thylakoid. The chain is Unknown protein from spots 23/28/205 of 2D-PAGE of thylakoid from Pisum sativum (Garden pea).